Consider the following 620-residue polypeptide: Chaperone protein HscA homolog (620 aa).

The protein belongs to the heat shock protein 70 family.

Its function is as follows. Chaperone involved in the maturation of iron-sulfur cluster-containing proteins. Has a low intrinsic ATPase activity which is markedly stimulated by HscB. The polypeptide is Chaperone protein HscA homolog (Neisseria meningitidis serogroup B (strain ATCC BAA-335 / MC58)).